The following is a 282-amino-acid chain: Ribonuclease 3 (282 aa).

The RNase III domain maps to 18–141; the sequence is FVAFFKSLNI…LVAAIYEDLG (124 aa). Glu-59 contributes to the Mg(2+) binding site. The active site involves Asp-63. Residues Asp-127 and Glu-130 each contribute to the Mg(2+) site. The active site involves Glu-130.

This sequence belongs to the ribonuclease III family. As to quaternary structure, homodimer. Mg(2+) is required as a cofactor.

The protein resides in the cytoplasm. The catalysed reaction is Endonucleolytic cleavage to 5'-phosphomonoester.. Digests double-stranded RNA. Involved in the processing of primary rRNA transcript to yield the immediate precursors to the large and small rRNAs (23S and 16S). Processes some mRNAs, and tRNAs when they are encoded in the rRNA operon. Processes pre-crRNA and tracrRNA of type II CRISPR loci if present in the organism. The protein is Ribonuclease 3 of Mycoplasmoides pneumoniae (strain ATCC 15531 / DSM 23978 / CIP 103766 / NBRC 14401 / NCTC 10119 / FH) (Mycoplasma pneumoniae).